We begin with the raw amino-acid sequence, 166 residues long: UPF0304 protein VC_1871 (166 aa).

The protein belongs to the UPF0304 family.

In Vibrio cholerae serotype O1 (strain ATCC 39315 / El Tor Inaba N16961), this protein is UPF0304 protein VC_1871.